The sequence spans 3305 residues: Microtubule-actin cross-linking factor 1, isoforms 6/7 (3305 aa).

Disordered regions lie at residues 1–24 (MGKPLSRPDCLRRNPTCLGKGEDE), 108–140 (VQKSAPVPPRRRPNAERKDNVNRRSWKSFMPPN), 152–202 (LSEV…KSVD), 239–272 (AAASGNTDEMQEHRFSSATWPRAMKSSSKGGFSE), 333–381 (EEWE…VAVS), 941–1007 (EPAI…PEWS), and 2865–2896 (SVEPTHAPFMEKSRSGSRKSLNQPTPPPMPIL). Positions 120–129 (PNAERKDNVN) are enriched in basic and acidic residues. EF-hand domains lie at 2958 to 2993 (HKKSRVMDFFRRIDKDQDGKITRQEFIDGILASKFP) and 2994 to 3029 (TTKLEMTAVADIFDRDGDGYIDYYEFVAALHPNKDA). Positions 2971, 2973, 2975, 2977, 2982, 3007, 3009, 3011, 3013, and 3018 each coordinate Ca(2+). Positions 3034-3106 (TDADKIEDEV…EFLVKNDPCR (73 aa)) constitute a GAR domain. Residues 3122-3305 (PEGASQGMTP…ASPRTPGPKR (184 aa)) are disordered. Low complexity predominate over residues 3142-3176 (SSRAASPTRSSSSASQSNHSCTSMPSSPATPASGT). The span at 3193-3212 (FHSSRTSLAGDTSNSSSPAS) shows a compositional bias: polar residues. Residues 3227–3241 (SRPGSRAGSRAGSRA) show a composition bias toward low complexity. A compositionally biased stretch (polar residues) spans 3256–3266 (ETQSACSDTSE). Residues 3267 to 3278 (SSAAGGQGSSRR) are compositionally biased toward low complexity.

The protein localises to the cytoplasm. The protein resides in the cytoskeleton. This Mus musculus (Mouse) protein is Microtubule-actin cross-linking factor 1, isoforms 6/7.